The following is a 94-amino-acid chain: Parvalbumin beta 4 (94 aa).

Position 1 is an N-acetylalanine (Ala1). EF-hand domains lie at 36 to 63 (FFAIIDQDHSGFIEEEELKLFLQTFSAG) and 67 to 94 (LSDAETKTFLAAGDVDGDGMIGVDEFAA). Ca(2+)-binding residues include Asp41, Asp43, Ser45, Phe47, Glu49, Glu52, Asp80, Asp82, Asp84, Met86, and Glu91.

The protein belongs to the parvalbumin family.

Its function is as follows. In muscle, parvalbumin is thought to be involved in relaxation after contraction. It binds two calcium ions. This is Parvalbumin beta 4 from Merluccius bilinearis (Silver hake).